The sequence spans 297 residues: Homoserine kinase (297 aa).

82-92 contributes to the ATP binding site; it reads PLTRGLGSSAS.

The protein belongs to the GHMP kinase family. Homoserine kinase subfamily.

The protein resides in the cytoplasm. The catalysed reaction is L-homoserine + ATP = O-phospho-L-homoserine + ADP + H(+). The protein operates within amino-acid biosynthesis; L-threonine biosynthesis; L-threonine from L-aspartate: step 4/5. Functionally, catalyzes the ATP-dependent phosphorylation of L-homoserine to L-homoserine phosphate. The protein is Homoserine kinase of Bacillus cereus (strain ZK / E33L).